Consider the following 456-residue polypeptide: Armadillo repeat-containing X-linked protein 1 (456 aa).

Residues 1-6 are Mitochondrial intermembrane-facing; the sequence is MGRTRE. Mitochondrion outer membrane (MOM)-targeting sequence regions lie at residues 1–6 and 26–36; these read MGRTRE and RLTWGKDENEK. Residues 7–29 form a helical; Signal-anchor membrane-spanning segment; it reads AGCVAAGMVIGAGACYCVYRLTW. Residues 30–456 lie on the Cytoplasmic side of the membrane; the sequence is GKDENEKLWD…VKVLKVLTKL (427 aa). 2 disordered regions span residues 37–106 and 139–186; these read LWDE…SGGG and RTLT…APAT. Residues 38–50 show a composition bias toward acidic residues; that stretch reads WDEEEEEEEEEEE. Composition is skewed to basic and acidic residues over residues 51-62 and 72-81; these read KSCSDKTEKELK and KPQDDSKSKV. Basic residues predominate over residues 162 to 180; that stretch reads SRARNRTSGKVKRKNRSKS. ARM repeat units lie at residues 198 to 238, 240 to 279, 361 to 401, and 418 to 456; these read PYKI…NNAA, SFNQ…NLSV, PAMT…NIND, and SSLF…LTKL.

This sequence belongs to the eutherian X-chromosome-specific Armcx family. As to quaternary structure, interacts with MIRO1. As to expression, widely expressed in the adult nervous tissue, especially in the forebrain, including the cerebral cortex, hippocampus and thalamus.

It localises to the mitochondrion. Its subcellular location is the mitochondrion outer membrane. Regulates mitochondrial transport during axon regeneration. Increases the proportion of motile mitochondria by recruiting stationary mitochondria into the motile pool. Enhances mitochondria movement and neurite growth in both adult axons and embryonic neurons. Promotes neuronal survival and axon regeneration after nerve injury. May link mitochondria to the Trak1-kinesin motor complex via its interaction with Miro1. The sequence is that of Armadillo repeat-containing X-linked protein 1 (Armcx1) from Mus musculus (Mouse).